The primary structure comprises 1410 residues: DNA-directed RNA polymerase subunit beta' (1410 aa).

4 residues coordinate Zn(2+): cysteine 70, cysteine 72, cysteine 85, and cysteine 88. Mg(2+) is bound by residues aspartate 460, aspartate 462, and aspartate 464. Zn(2+) is bound by residues cysteine 814, cysteine 888, cysteine 895, and cysteine 898.

This sequence belongs to the RNA polymerase beta' chain family. In terms of assembly, the RNAP catalytic core consists of 2 alpha, 1 beta, 1 beta' and 1 omega subunit. When a sigma factor is associated with the core the holoenzyme is formed, which can initiate transcription. Mg(2+) serves as cofactor. The cofactor is Zn(2+).

It catalyses the reaction RNA(n) + a ribonucleoside 5'-triphosphate = RNA(n+1) + diphosphate. DNA-dependent RNA polymerase catalyzes the transcription of DNA into RNA using the four ribonucleoside triphosphates as substrates. This Saccharophagus degradans (strain 2-40 / ATCC 43961 / DSM 17024) protein is DNA-directed RNA polymerase subunit beta'.